Here is a 155-residue protein sequence, read N- to C-terminus: SsrA-binding protein (155 aa).

The protein belongs to the SmpB family.

It is found in the cytoplasm. In terms of biological role, required for rescue of stalled ribosomes mediated by trans-translation. Binds to transfer-messenger RNA (tmRNA), required for stable association of tmRNA with ribosomes. tmRNA and SmpB together mimic tRNA shape, replacing the anticodon stem-loop with SmpB. tmRNA is encoded by the ssrA gene; the 2 termini fold to resemble tRNA(Ala) and it encodes a 'tag peptide', a short internal open reading frame. During trans-translation Ala-aminoacylated tmRNA acts like a tRNA, entering the A-site of stalled ribosomes, displacing the stalled mRNA. The ribosome then switches to translate the ORF on the tmRNA; the nascent peptide is terminated with the 'tag peptide' encoded by the tmRNA and targeted for degradation. The ribosome is freed to recommence translation, which seems to be the essential function of trans-translation. The protein is SsrA-binding protein of Bordetella bronchiseptica (strain ATCC BAA-588 / NCTC 13252 / RB50) (Alcaligenes bronchisepticus).